Here is a 258-residue protein sequence, read N- to C-terminus: Glucanase inhibitor protein 3 (258 aa).

An N-terminal signal peptide occupies residues 1 to 19 (MKIISAVAASSIALGAVSA). The Peptidase S1 domain occupies 29 to 256 (VLGGAVVPSG…ALEWINSITK (228 aa)). Cys56 and Cys72 are joined by a disulfide. Residues Asn90, Asn105, and Asn110 are each glycosylated (N-linked (GlcNAc...) asparagine). 2 disulfide bridges follow: Cys180–Cys192 and Cys202–Cys233.

This sequence belongs to the peptidase S1 family. As to quaternary structure, forms an apoplastic complex with host endoglucanases in tomato leaves during P.infestans infection.

It localises to the secreted. In terms of biological role, secreted effector that suppresses host plant glucan elicitor-mediated defense responses. Targets host endoglucanases and inhibits the endoglucanase-mediated release of elicitor-active glucan oligosaccharides from P.infestans cell walls. This Phytophthora infestans (Potato late blight agent) protein is Glucanase inhibitor protein 3.